A 241-amino-acid polypeptide reads, in one-letter code: General transcription factor IIF subunit 2 (241 aa).

Belongs to the TFIIF beta subunit family. As to quaternary structure, heterodimer of an alpha and a beta subunit.

Its subcellular location is the nucleus. Its function is as follows. TFIIF is a general transcription initiation factor that binds to RNA polymerase II and helps to recruit it to the initiation complex in collaboration with TFIIB. The protein is General transcription factor IIF subunit 2 (gtf2f2) of Dictyostelium discoideum (Social amoeba).